The primary structure comprises 479 residues: RHO1 GEF localizing protein 1 (479 aa).

Residues 460–479 (SQKDPSRTDPSKLRRVPVIQ) form a disordered region.

Functionally, regulator of RHO1 signaling that acts as a cofactor required for the efficient localization of the TUS1 GTP exchange factor (GEF) for RHO1 to the bud neck during all phases of cytokinesis. RHO1 is a key, essential hub protein in the cell wall integrity (CWI) pathway in which activated RHO1-GTP binds directly to and activates multiple different downstream effectors required for cell wall synthesis and actin assembly during cytokinesis. The polypeptide is RHO1 GEF localizing protein 1 (Saccharomyces cerevisiae (strain ATCC 204508 / S288c) (Baker's yeast)).